Reading from the N-terminus, the 363-residue chain is Glycerol-3-phosphate dehydrogenase [NAD(+)], cytoplasmic (363 aa).

Residues 11-16 (GSGNWG), Phe-98, Lys-121, and Ala-155 each bind NAD(+). Substrate is bound at residue Lys-121. The active-site Proton acceptor is the Lys-206. Arg-270 and Gln-299 together coordinate NAD(+). 270–271 (RN) serves as a coordination point for substrate.

The protein belongs to the NAD-dependent glycerol-3-phosphate dehydrogenase family. As to quaternary structure, homodimer. Isoform GPDH-1 is predominant in thorax and isoform GPDH-3 in abdomen.

The protein localises to the cytoplasm. The catalysed reaction is sn-glycerol 3-phosphate + NAD(+) = dihydroxyacetone phosphate + NADH + H(+). The protein operates within phospholipid metabolism; alpha-glycerophosphate cycle. The protein is Glycerol-3-phosphate dehydrogenase [NAD(+)], cytoplasmic of Drosophila melanogaster (Fruit fly).